The primary structure comprises 447 residues: Probable glycine dehydrogenase (decarboxylating) subunit 1 (447 aa).

Belongs to the GcvP family. N-terminal subunit subfamily. As to quaternary structure, the glycine cleavage system is composed of four proteins: P, T, L and H. In this organism, the P 'protein' is a heterodimer of two subunits.

It catalyses the reaction N(6)-[(R)-lipoyl]-L-lysyl-[glycine-cleavage complex H protein] + glycine + H(+) = N(6)-[(R)-S(8)-aminomethyldihydrolipoyl]-L-lysyl-[glycine-cleavage complex H protein] + CO2. The glycine cleavage system catalyzes the degradation of glycine. The P protein binds the alpha-amino group of glycine through its pyridoxal phosphate cofactor; CO(2) is released and the remaining methylamine moiety is then transferred to the lipoamide cofactor of the H protein. This chain is Probable glycine dehydrogenase (decarboxylating) subunit 1, found in Sulfolobus acidocaldarius (strain ATCC 33909 / DSM 639 / JCM 8929 / NBRC 15157 / NCIMB 11770).